A 258-amino-acid chain; its full sequence is Spindlin-3 (258 aa).

Positions 1–23 (MKTPFGKAAAGQRSRTGAGHGSV) are disordered. Tudor-like domain regions lie at residues 50 to 99 (VGCR…LELH), 129 to 178 (VGKA…YQLL), and 210 to 255 (VGKQ…YDLV). Histone H3K4me3 and H3R8me2a binding stretches follow at residues E138 and 246–248 (DFH).

The protein belongs to the SPIN/STSY family. Interacts with C11orf84/SPINDOC.

In terms of biological role, exhibits H3K4me3-binding activity. The chain is Spindlin-3 (SPIN3) from Homo sapiens (Human).